The primary structure comprises 197 residues: Nucleoid occlusion factor SlmA (197 aa).

The region spanning I7–L67 is the HTH tetR-type domain. A DNA-binding region (H-T-H motif) is located at residues T30–F49. Residues D109–I136 adopt a coiled-coil conformation.

This sequence belongs to the nucleoid occlusion factor SlmA family. As to quaternary structure, homodimer. Interacts with FtsZ.

The protein resides in the cytoplasm. Its subcellular location is the nucleoid. Functionally, required for nucleoid occlusion (NO) phenomenon, which prevents Z-ring formation and cell division over the nucleoid. Acts as a DNA-associated cell division inhibitor that binds simultaneously chromosomal DNA and FtsZ, and disrupts the assembly of FtsZ polymers. SlmA-DNA-binding sequences (SBS) are dispersed on non-Ter regions of the chromosome, preventing FtsZ polymerization at these regions. The protein is Nucleoid occlusion factor SlmA of Shewanella baltica (strain OS223).